The chain runs to 530 residues: Glutamate--cysteine ligase (530 aa).

The protein belongs to the glutamate--cysteine ligase type 1 family. Type 1 subfamily.

The enzyme catalyses L-cysteine + L-glutamate + ATP = gamma-L-glutamyl-L-cysteine + ADP + phosphate + H(+). It participates in sulfur metabolism; glutathione biosynthesis; glutathione from L-cysteine and L-glutamate: step 1/2. This Saccharophagus degradans (strain 2-40 / ATCC 43961 / DSM 17024) protein is Glutamate--cysteine ligase.